A 295-amino-acid polypeptide reads, in one-letter code: tRNA pseudouridine synthase B (295 aa).

The active-site Nucleophile is Asp-42.

The protein belongs to the pseudouridine synthase TruB family. Type 1 subfamily.

It carries out the reaction uridine(55) in tRNA = pseudouridine(55) in tRNA. Responsible for synthesis of pseudouridine from uracil-55 in the psi GC loop of transfer RNAs. In Cutibacterium acnes (strain DSM 16379 / KPA171202) (Propionibacterium acnes), this protein is tRNA pseudouridine synthase B.